The chain runs to 273 residues: Hydroxyethylthiazole kinase (273 aa).

Methionine 47 serves as a coordination point for substrate. ATP contacts are provided by arginine 123 and threonine 172. Glycine 199 contributes to the substrate binding site.

It belongs to the Thz kinase family. It depends on Mg(2+) as a cofactor.

The enzyme catalyses 5-(2-hydroxyethyl)-4-methylthiazole + ATP = 4-methyl-5-(2-phosphooxyethyl)-thiazole + ADP + H(+). The protein operates within cofactor biosynthesis; thiamine diphosphate biosynthesis; 4-methyl-5-(2-phosphoethyl)-thiazole from 5-(2-hydroxyethyl)-4-methylthiazole: step 1/1. In terms of biological role, catalyzes the phosphorylation of the hydroxyl group of 4-methyl-5-beta-hydroxyethylthiazole (THZ). This Ruminiclostridium cellulolyticum (strain ATCC 35319 / DSM 5812 / JCM 6584 / H10) (Clostridium cellulolyticum) protein is Hydroxyethylthiazole kinase.